The primary structure comprises 617 residues: Dihydroxy-acid dehydratase (617 aa).

Mg(2+) is bound at residue aspartate 81. Cysteine 122 is a binding site for [2Fe-2S] cluster. Residues aspartate 123 and lysine 124 each contribute to the Mg(2+) site. Lysine 124 is subject to N6-carboxylysine. Cysteine 195 is a [2Fe-2S] cluster binding site. A Mg(2+)-binding site is contributed by glutamate 492. Residue serine 518 is the Proton acceptor of the active site.

The protein belongs to the IlvD/Edd family. As to quaternary structure, homodimer. Requires [2Fe-2S] cluster as cofactor. The cofactor is Mg(2+).

It carries out the reaction (2R)-2,3-dihydroxy-3-methylbutanoate = 3-methyl-2-oxobutanoate + H2O. The enzyme catalyses (2R,3R)-2,3-dihydroxy-3-methylpentanoate = (S)-3-methyl-2-oxopentanoate + H2O. The protein operates within amino-acid biosynthesis; L-isoleucine biosynthesis; L-isoleucine from 2-oxobutanoate: step 3/4. It functions in the pathway amino-acid biosynthesis; L-valine biosynthesis; L-valine from pyruvate: step 3/4. In terms of biological role, functions in the biosynthesis of branched-chain amino acids. Catalyzes the dehydration of (2R,3R)-2,3-dihydroxy-3-methylpentanoate (2,3-dihydroxy-3-methylvalerate) into 2-oxo-3-methylpentanoate (2-oxo-3-methylvalerate) and of (2R)-2,3-dihydroxy-3-methylbutanoate (2,3-dihydroxyisovalerate) into 2-oxo-3-methylbutanoate (2-oxoisovalerate), the penultimate precursor to L-isoleucine and L-valine, respectively. The polypeptide is Dihydroxy-acid dehydratase (Azorhizobium caulinodans (strain ATCC 43989 / DSM 5975 / JCM 20966 / LMG 6465 / NBRC 14845 / NCIMB 13405 / ORS 571)).